Consider the following 270-residue polypeptide: Methionine-rich protein (270 aa).

The N-terminal stretch at 1-18 (MLSLWAIGLLGLLNQVEA) is a signal peptide. Polar residues predominate over residues 31–52 (QRSAQFSSSGWGTSPAAQNPWS). Positions 31 to 95 (QRSAQFSSSG…MPGSMPGAMP (65 aa)) are disordered. Low complexity predominate over residues 56–95 (PMPNTNMPNMNTGSLPGSMPGAMPGSMPGAMPGSMPGAMP).

As to expression, component of the acid-soluble organic matrix of calcified layers of the shell (at protein level).

The protein localises to the secreted. In Lottia gigantea (Giant owl limpet), this protein is Methionine-rich protein.